The primary structure comprises 333 residues: Probable tRNA pseudouridine synthase B (333 aa).

Aspartate 66 acts as the Nucleophile in catalysis. One can recognise a PUA domain in the interval 233-308 (LKKIIIKDSA…EVVEITRVIM (76 aa)).

It belongs to the pseudouridine synthase TruB family. Type 2 subfamily.

The enzyme catalyses uridine(55) in tRNA = pseudouridine(55) in tRNA. Its function is as follows. Could be responsible for synthesis of pseudouridine from uracil-55 in the psi GC loop of transfer RNAs. This chain is Probable tRNA pseudouridine synthase B, found in Methanococcus maripaludis (strain DSM 14266 / JCM 13030 / NBRC 101832 / S2 / LL).